The following is a 364-amino-acid chain: Aminomethyltransferase (364 aa).

It belongs to the GcvT family. The glycine cleavage system is composed of four proteins: P, T, L and H.

The catalysed reaction is N(6)-[(R)-S(8)-aminomethyldihydrolipoyl]-L-lysyl-[protein] + (6S)-5,6,7,8-tetrahydrofolate = N(6)-[(R)-dihydrolipoyl]-L-lysyl-[protein] + (6R)-5,10-methylene-5,6,7,8-tetrahydrofolate + NH4(+). Its function is as follows. The glycine cleavage system catalyzes the degradation of glycine. The sequence is that of Aminomethyltransferase from Escherichia coli O6:H1 (strain CFT073 / ATCC 700928 / UPEC).